The primary structure comprises 508 residues: Phenylalanine--tRNA ligase alpha subunit (508 aa).

The residue at position 2 (alanine 2) is an N-acetylalanine. Serine 193 and serine 301 each carry phosphoserine. At lysine 311 the chain carries N6-acetyllysine. Residues threonine 329, 372–374, and tyrosine 412 each bind L-phenylalanine; that span reads QIE. Glutamate 414 is a Mg(2+) binding site. Phenylalanine 438 is a binding site for L-phenylalanine.

It belongs to the class-II aminoacyl-tRNA synthetase family. Phe-tRNA synthetase alpha subunit type 2 subfamily. As to quaternary structure, heterotetramer; dimer of two heterodimers formed by FARSA and FARSB. Mg(2+) is required as a cofactor.

Its subcellular location is the cytoplasm. The enzyme catalyses tRNA(Phe) + L-phenylalanine + ATP = L-phenylalanyl-tRNA(Phe) + AMP + diphosphate + H(+). In Mus musculus (Mouse), this protein is Phenylalanine--tRNA ligase alpha subunit (Farsa).